A 222-amino-acid chain; its full sequence is Octanoyltransferase (222 aa).

One can recognise a BPL/LPL catalytic domain in the interval E35–K210. Substrate is bound by residues R74 to H81, S141 to G143, and G154 to A156. C172 acts as the Acyl-thioester intermediate in catalysis.

It belongs to the LipB family.

It is found in the cytoplasm. It catalyses the reaction octanoyl-[ACP] + L-lysyl-[protein] = N(6)-octanoyl-L-lysyl-[protein] + holo-[ACP] + H(+). The protein operates within protein modification; protein lipoylation via endogenous pathway; protein N(6)-(lipoyl)lysine from octanoyl-[acyl-carrier-protein]: step 1/2. Its function is as follows. Catalyzes the transfer of endogenously produced octanoic acid from octanoyl-acyl-carrier-protein onto the lipoyl domains of lipoate-dependent enzymes. Lipoyl-ACP can also act as a substrate although octanoyl-ACP is likely to be the physiological substrate. The protein is Octanoyltransferase of Serratia proteamaculans (strain 568).